The sequence spans 422 residues: Imidazolonepropionase (422 aa).

Fe(3+) contacts are provided by histidine 82 and histidine 84. Zn(2+)-binding residues include histidine 82 and histidine 84. 3 residues coordinate 4-imidazolone-5-propanoate: arginine 91, tyrosine 154, and histidine 187. Tyrosine 154 is an N-formimidoyl-L-glutamate binding site. Histidine 252 contacts Fe(3+). Histidine 252 provides a ligand contact to Zn(2+). Glutamate 255 contacts 4-imidazolone-5-propanoate. A Fe(3+)-binding site is contributed by aspartate 327. Aspartate 327 is a Zn(2+) binding site. Positions 329 and 331 each coordinate N-formimidoyl-L-glutamate. Position 332 (serine 332) interacts with 4-imidazolone-5-propanoate.

Belongs to the metallo-dependent hydrolases superfamily. HutI family. Zn(2+) serves as cofactor. Fe(3+) is required as a cofactor.

It is found in the cytoplasm. It catalyses the reaction 4-imidazolone-5-propanoate + H2O = N-formimidoyl-L-glutamate. The protein operates within amino-acid degradation; L-histidine degradation into L-glutamate; N-formimidoyl-L-glutamate from L-histidine: step 3/3. Functionally, catalyzes the hydrolytic cleavage of the carbon-nitrogen bond in imidazolone-5-propanoate to yield N-formimidoyl-L-glutamate. It is the third step in the universal histidine degradation pathway. The sequence is that of Imidazolonepropionase from Alkaliphilus oremlandii (strain OhILAs) (Clostridium oremlandii (strain OhILAs)).